The chain runs to 578 residues: MKASRFFIGTLKEAPADAEIVSHKLMVRAGMIRRVAGGIYNYLPVGLRSIRKVEAIVREEMNRAGAIELLMPAVQPAELWQESGRWEQYGPELLRFKDRKQNEFVIGPTHEEVVTDIARNQIKSYRQMPVNFYQIQTKFRDEIRPRFGVMRGREFIMKDAYSFDKDHESLKESYKKMYDAYVRIFTRIGLEFRPVAADNGSIGGSGSHEFHVIADTGEDAIAYCPTSDFAANVEAAEALPLLASRAAPAEAMQKVATPGKAKCEAVAELMGIPLERTIKSIVLATDNEGAEPTVWLLMLRGDHDLNEIKTAKLPGLAGYRFATEAEIVEWFGTPPGYLGPIGTKKPVRVVADRTVANMSDFVVGANEVDYHIAGVNWGRDLPEPVIADIRNVKAGDPSPDGKGVLDICRGIEVGHVFQLGTKYSDAMGATFIDESGKAQPMVMGCYGIGVTRILGAAIEQNFDDKGIIWPEAIAPFEVVLCPMGYDRSDAVREAADKLYADLAAAGIDVILDDRGERPGVMFADWELIGVPHRLVIGERGLKDGKIEYQGRRDAEATLLPADSAATAVAEKVRAALAR.

Belongs to the class-II aminoacyl-tRNA synthetase family. ProS type 1 subfamily. Homodimer.

The protein resides in the cytoplasm. The catalysed reaction is tRNA(Pro) + L-proline + ATP = L-prolyl-tRNA(Pro) + AMP + diphosphate. Its function is as follows. Catalyzes the attachment of proline to tRNA(Pro) in a two-step reaction: proline is first activated by ATP to form Pro-AMP and then transferred to the acceptor end of tRNA(Pro). As ProRS can inadvertently accommodate and process non-cognate amino acids such as alanine and cysteine, to avoid such errors it has two additional distinct editing activities against alanine. One activity is designated as 'pretransfer' editing and involves the tRNA(Pro)-independent hydrolysis of activated Ala-AMP. The other activity is designated 'posttransfer' editing and involves deacylation of mischarged Ala-tRNA(Pro). The misacylated Cys-tRNA(Pro) is not edited by ProRS. The sequence is that of Proline--tRNA ligase from Burkholderia thailandensis (strain ATCC 700388 / DSM 13276 / CCUG 48851 / CIP 106301 / E264).